The primary structure comprises 146 residues: Interleukin-3 (146 aa).

The signal sequence occupies residues 1–17 (MSSLSILHLLLLLLSLH). N-linked (GlcNAc...) asparagine glycosylation is present at Asn-65.

It belongs to the IL-3 family. As to quaternary structure, monomer. As to expression, activated T-cells, mast cells, natural killer cells.

It localises to the secreted. Its function is as follows. Granulocyte/macrophage colony-stimulating factors are cytokines that act in hematopoiesis by controlling the production, differentiation, and function of 2 related white cell populations of the blood, the granulocytes and the monocytes-macrophages. This CSF induces granulocytes, macrophages, mast cells, stem cells, erythroid cells, eosinophils and megakaryocytes. The polypeptide is Interleukin-3 (IL3) (Ovis aries (Sheep)).